Consider the following 863-residue polypeptide: Probable beta-glucosidase A (863 aa).

The first 19 residues, 1 to 19 (MKLGWLEAAALTAASVASA), serve as a signal peptide directing secretion. 3 N-linked (GlcNAc...) asparagine glycosylation sites follow: N65, N214, and N255. Residue D283 is part of the active site. N-linked (GlcNAc...) asparagine glycosylation is found at N318, N325, N357, N493, N526, N545, N567, N664, and N715. The interval 720-754 (KESSGDPNYGWDDEDYIPEGAKDGSPQDVLPSGGG) is disordered.

It belongs to the glycosyl hydrolase 3 family.

Its subcellular location is the secreted. It catalyses the reaction Hydrolysis of terminal, non-reducing beta-D-glucosyl residues with release of beta-D-glucose.. Its pathway is glycan metabolism; cellulose degradation. In terms of biological role, beta-glucosidases are one of a number of cellulolytic enzymes involved in the degradation of cellulosic biomass. Catalyzes the last step releasing glucose from the inhibitory cellobiose. The polypeptide is Probable beta-glucosidase A (bglA) (Emericella nidulans (strain FGSC A4 / ATCC 38163 / CBS 112.46 / NRRL 194 / M139) (Aspergillus nidulans)).